Here is a 441-residue protein sequence, read N- to C-terminus: ATP-dependent protease ATPase subunit HslU (441 aa).

ATP-binding positions include valine 18, 60–65 (GVGKTE), aspartate 254, glutamate 319, and arginine 391.

This sequence belongs to the ClpX chaperone family. HslU subfamily. A double ring-shaped homohexamer of HslV is capped on each side by a ring-shaped HslU homohexamer. The assembly of the HslU/HslV complex is dependent on binding of ATP.

Its subcellular location is the cytoplasm. Functionally, ATPase subunit of a proteasome-like degradation complex; this subunit has chaperone activity. The binding of ATP and its subsequent hydrolysis by HslU are essential for unfolding of protein substrates subsequently hydrolyzed by HslV. HslU recognizes the N-terminal part of its protein substrates and unfolds these before they are guided to HslV for hydrolysis. This is ATP-dependent protease ATPase subunit HslU from Verminephrobacter eiseniae (strain EF01-2).